The sequence spans 385 residues: DNA replication and repair protein RecF (385 aa).

30-37 (GPNGYGKT) is an ATP binding site.

This sequence belongs to the RecF family.

It is found in the cytoplasm. The RecF protein is involved in DNA metabolism; it is required for DNA replication and normal SOS inducibility. RecF binds preferentially to single-stranded, linear DNA. It also seems to bind ATP. The polypeptide is DNA replication and repair protein RecF (Mycobacterium tuberculosis (strain ATCC 25177 / H37Ra)).